The chain runs to 285 residues: Cytochrome P450 monooxygenase eupD (285 aa).

The N-terminal stretch at 1–19 (MSIAGLVTTLPWLMNMLRA) is a signal peptide. C229 serves as a coordination point for heme.

The protein belongs to the cytochrome P450 family. Heme is required as a cofactor.

It functions in the pathway secondary metabolite biosynthesis; terpenoid biosynthesis. Functionally, cytochrome P450 monooxygenase; part of the gene cluster that mediates the biosynthesis of eupenifeldin, a bistropolone meroterpenoid that acts as an antitumor agent. The first step of eupenifeldin biosynthesis is the biosynthesis of 3-methylorcinaldehyde performed by the non-reducing polyketide synthase eupA. Oxidative dearomatization of 3-methylorcinaldehyde likely catalyzed by the FAD-dependent monooxygenase eupB is followed by oxidative ring expansion by the 2-oxoglutarate-dependent dioxygenase eupC to provide the first tropolone metabolite, tropolone stipitaldehyde. In parallel, generation of sesquiterpene alpha-humulene from farnesylpyrophosphate (FPP) is catalyzed by the terpene cyclase eupE. The cytochrome P450 monooxygenase eupD then hydroxylates humulene to humulenol. The putative Diels-Alderase eupF probably catalyzes the formation of the tropolone-humulene skeleton by linking humulenol and the polyketide moiety. The short-chain dehydrogenase/reductase eupG and the flavin-dependent monooxygenase eupH are also essential for eupenifeldin biosynthesis and are likely the additional decorating enzymes of the tropolone-humulene skeleton to produce final eupenifeldin or derivatives. This chain is Cytochrome P450 monooxygenase eupD, found in Phoma sp.